Consider the following 156-residue polypeptide: SsrA-binding protein (156 aa).

It belongs to the SmpB family.

It is found in the cytoplasm. In terms of biological role, required for rescue of stalled ribosomes mediated by trans-translation. Binds to transfer-messenger RNA (tmRNA), required for stable association of tmRNA with ribosomes. tmRNA and SmpB together mimic tRNA shape, replacing the anticodon stem-loop with SmpB. tmRNA is encoded by the ssrA gene; the 2 termini fold to resemble tRNA(Ala) and it encodes a 'tag peptide', a short internal open reading frame. During trans-translation Ala-aminoacylated tmRNA acts like a tRNA, entering the A-site of stalled ribosomes, displacing the stalled mRNA. The ribosome then switches to translate the ORF on the tmRNA; the nascent peptide is terminated with the 'tag peptide' encoded by the tmRNA and targeted for degradation. The ribosome is freed to recommence translation, which seems to be the essential function of trans-translation. This Thermoanaerobacter pseudethanolicus (strain ATCC 33223 / 39E) (Clostridium thermohydrosulfuricum) protein is SsrA-binding protein.